The chain runs to 150 residues: uncharacterized protein (150 aa).

An N-terminal signal peptide occupies residues 1 to 22 (MVIALKRFSFLASIATLTVLNA). Cys-23 carries N-palmitoyl cysteine lipidation. Cys-23 carries the S-diacylglycerol cysteine lipid modification.

Belongs to the MG067/MG068/MG395 family.

The protein resides in the cell membrane. This is an uncharacterized protein from Mycoplasma pneumoniae (strain ATCC 29342 / M129 / Subtype 1) (Mycoplasmoides pneumoniae).